We begin with the raw amino-acid sequence, 430 residues long: uncharacterized protein (430 aa).

Transmembrane regions (helical) follow at residues 20–40 (YLCL…GIMP) and 405–425 (YIWW…LLVI).

Its subcellular location is the membrane. This is an uncharacterized protein from Schizosaccharomyces pombe (strain 972 / ATCC 24843) (Fission yeast).